Consider the following 306-residue polypeptide: Mycothiol acetyltransferase (306 aa).

N-acetyltransferase domains are found at residues 17-163 (VARV…RPMP) and 166-306 (LALS…YRRA). Glu-48 provides a ligand contact to 1D-myo-inositol 2-(L-cysteinylamino)-2-deoxy-alpha-D-glucopyranoside. Acetyl-CoA is bound at residue 89–91 (IVV). Residues Glu-192, Lys-232, and Glu-239 each coordinate 1D-myo-inositol 2-(L-cysteinylamino)-2-deoxy-alpha-D-glucopyranoside. Residues 243 to 245 (LGV) and 250 to 256 (AARGLGS) each bind acetyl-CoA. A 1D-myo-inositol 2-(L-cysteinylamino)-2-deoxy-alpha-D-glucopyranoside-binding site is contributed by Tyr-277.

This sequence belongs to the acetyltransferase family. MshD subfamily. Monomer.

The enzyme catalyses 1D-myo-inositol 2-(L-cysteinylamino)-2-deoxy-alpha-D-glucopyranoside + acetyl-CoA = mycothiol + CoA + H(+). Functionally, catalyzes the transfer of acetyl from acetyl-CoA to desacetylmycothiol (Cys-GlcN-Ins) to form mycothiol. The polypeptide is Mycothiol acetyltransferase (Clavibacter michiganensis subsp. michiganensis (strain NCPPB 382)).